We begin with the raw amino-acid sequence, 101 residues long: UPF0473 protein LAF_0524 (101 aa).

Belongs to the UPF0473 family.

This chain is UPF0473 protein LAF_0524, found in Limosilactobacillus fermentum (strain NBRC 3956 / LMG 18251) (Lactobacillus fermentum).